The primary structure comprises 83 residues: RNA-binding protein Hfq (83 aa).

In terms of domain architecture, Sm spans 9–68 (DPYLNILRKERIPVSIFLVNGIKLQGQIESFDQFVILLRNTVSQMVYKHAISTVVPSRNV).

Belongs to the Hfq family. As to quaternary structure, homohexamer.

In terms of biological role, RNA chaperone that binds small regulatory RNA (sRNAs) and mRNAs to facilitate mRNA translational regulation in response to envelope stress, environmental stress and changes in metabolite concentrations. Also binds with high specificity to tRNAs. This is RNA-binding protein Hfq from Chromohalobacter salexigens (strain ATCC BAA-138 / DSM 3043 / CIP 106854 / NCIMB 13768 / 1H11).